Reading from the N-terminus, the 381-residue chain is MKYELQTTDGRARRGRLIFERGVVETPAFMPVGTYGTVKGMTPEEVKETGAQILLGNTFHLWLRPGQEIMKLHGDLHDFMNWHGPILTDSGGFQVFSLGDIRKITEQGVHFRNPINGDSIFLSPEKSMEIQNDLGSDIVMIFDECTPYPADWDYAKRSMEMSLRWAKRSRQRFDELENKNALFGIIQGSVYEDLRDVSVKGLVDIGFDGYAVGGLAVGEPKEDMHRILEHVCPQIPEDKPRYLMGVGKPEDLVEGVRRGVDMFDCVMPTRNARNGHLFVTDGVVKIRNAKHKDDVSSLDEHCDCYTCRNYSRAYLHHLDRCNEILGARLNTIHNLRYYQRLMAGLRQAIEEGKLELFVVDFYQRIGKPIPPLAEKDVAASN.

Asp-89 serves as the catalytic Proton acceptor. Substrate-binding positions include 89–93 (DSGGF), Asp-143, Gln-187, and Gly-214. The interval 245–251 (GVGKPED) is RNA binding. The Nucleophile role is filled by Asp-264. The RNA binding; important for wobble base 34 recognition stretch occupies residues 269–273 (TRNAR). Positions 302, 304, 307, and 333 each coordinate Zn(2+).

This sequence belongs to the queuine tRNA-ribosyltransferase family. Homodimer. Within each dimer, one monomer is responsible for RNA recognition and catalysis, while the other monomer binds to the replacement base PreQ1. Requires Zn(2+) as cofactor.

It catalyses the reaction 7-aminomethyl-7-carbaguanine + guanosine(34) in tRNA = 7-aminomethyl-7-carbaguanosine(34) in tRNA + guanine. Its pathway is tRNA modification; tRNA-queuosine biosynthesis. In terms of biological role, catalyzes the base-exchange of a guanine (G) residue with the queuine precursor 7-aminomethyl-7-deazaguanine (PreQ1) at position 34 (anticodon wobble position) in tRNAs with GU(N) anticodons (tRNA-Asp, -Asn, -His and -Tyr). Catalysis occurs through a double-displacement mechanism. The nucleophile active site attacks the C1' of nucleotide 34 to detach the guanine base from the RNA, forming a covalent enzyme-RNA intermediate. The proton acceptor active site deprotonates the incoming PreQ1, allowing a nucleophilic attack on the C1' of the ribose to form the product. After dissociation, two additional enzymatic reactions on the tRNA convert PreQ1 to queuine (Q), resulting in the hypermodified nucleoside queuosine (7-(((4,5-cis-dihydroxy-2-cyclopenten-1-yl)amino)methyl)-7-deazaguanosine). The protein is Queuine tRNA-ribosyltransferase of Pectobacterium atrosepticum (strain SCRI 1043 / ATCC BAA-672) (Erwinia carotovora subsp. atroseptica).